The following is a 520-amino-acid chain: Dual specificity tyrosine-phosphorylation-regulated kinase 4 (520 aa).

The segment at 1–32 (MPASELKASEIPFHPSIKTQDPKAEEKSPKKQ) is disordered. The short motif at 19–37 (TQDPKAEEKSPKKQKVTLT) is the Bipartite nuclear localization signal element. Basic and acidic residues predominate over residues 20–29 (QDPKAEEKSP). The Protein kinase domain maps to 104 to 400 (YEVLETIGKG…PDQALKHAWI (297 aa)). ATP is bound by residues 110–118 (IGKGSFGQV), K133, and 183–186 (FELL). The Proton acceptor role is filled by D230. Position 264 is a phosphotyrosine; by autocatalysis (Y264). Residues 404–467 (RNLKPQPRPQ…KHVQHSGDQQ (64 aa)) are disordered. Positions 439-457 (RKADEITKETTEKTKDSPT) are enriched in basic and acidic residues.

The protein belongs to the protein kinase superfamily. CMGC Ser/Thr protein kinase family. MNB/DYRK subfamily. Requires Mg(2+) as cofactor. In terms of processing, autophosphorylation on Tyr-264 in the activation loop is required for kinase activity.

It localises to the cytoplasm. The protein localises to the nucleus. It carries out the reaction L-seryl-[protein] + ATP = O-phospho-L-seryl-[protein] + ADP + H(+). The enzyme catalyses L-threonyl-[protein] + ATP = O-phospho-L-threonyl-[protein] + ADP + H(+). The catalysed reaction is L-tyrosyl-[protein] + ATP = O-phospho-L-tyrosyl-[protein] + ADP + H(+). Possible non-essential role in spermiogenesis. This chain is Dual specificity tyrosine-phosphorylation-regulated kinase 4 (DYRK4), found in Homo sapiens (Human).